Reading from the N-terminus, the 679-residue chain is Glycine--tRNA ligase beta subunit (679 aa).

It belongs to the class-II aminoacyl-tRNA synthetase family. As to quaternary structure, tetramer of two alpha and two beta subunits.

The protein resides in the cytoplasm. The enzyme catalyses tRNA(Gly) + glycine + ATP = glycyl-tRNA(Gly) + AMP + diphosphate. The protein is Glycine--tRNA ligase beta subunit of Streptococcus agalactiae serotype Ia (strain ATCC 27591 / A909 / CDC SS700).